A 242-amino-acid polypeptide reads, in one-letter code: MKLNIAYPAQGTQKCIDIEDEHRVRGFYEKRMGQEVEADFLGDEFKGYVLKITGGNDKQGFPMKQGVMHPTRVRLLLSKDSSCYRSRRAGERKRKSVRGCIVSSDLSVLSVVIVKQGDADIEGLTTETVPRRLGPKRANNIRKLFALSKEDDVRQYVIRREVTTKSGKTYTKAPKIQRLITPRRLAHKAQLREKKVKAIQASKDAAAEYAQLLAKRVAEKKSEKAEEKKRRASSLRTQSVQA.

A compositionally biased stretch (basic and acidic residues) spans 219–229 (EKKSEKAEEKK). The interval 219 to 242 (EKKSEKAEEKKRRASSLRTQSVQA) is disordered. Phosphoserine occurs at positions 233 and 234.

Belongs to the eukaryotic ribosomal protein eS6 family. In terms of processing, phosphorylated.

This Yarrowia lipolytica (strain CLIB 122 / E 150) (Yeast) protein is Small ribosomal subunit protein eS6 (RPS6).